The sequence spans 136 residues: Large ribosomal subunit protein uL16c (136 aa).

Belongs to the universal ribosomal protein uL16 family. As to quaternary structure, part of the 50S ribosomal subunit.

It localises to the plastid. It is found in the chloroplast. This chain is Large ribosomal subunit protein uL16c, found in Oryza sativa (Rice).